Reading from the N-terminus, the 492-residue chain is GDP-Man:Man(3)GlcNAc(2)-PP-Dol alpha-1,2-mannosyltransferase (492 aa).

Over 1–19 (MAAGERSWCLCKLLRFFYS) the chain is Lumenal. A helical transmembrane segment spans residues 20 to 40 (LFFPGLIVCGTLCVCLVIVLW). Over 41–233 (GIRLLLQRKK…TRNPFLSKVK (193 aa)) the chain is Cytoplasmic. Residues 234 to 254 (LIYYYLFAFIYGLVGSCSDVV) constitute an intramembrane region (helical). The Cytoplasmic segment spans residues 255 to 399 (MVNSSWTLNH…IGLHTMWNEH (145 aa)). The segment at residues 400–420 (FGIGVVECMAAGTIILAHNSG) is an intramembrane region (helical). Topologically, residues 421–492 (GPKLDIVVPH…FLSSVEKLFK (72 aa)) are cytoplasmic.

Belongs to the glycosyltransferase group 1 family. Glycosyltransferase 4 subfamily.

It is found in the endoplasmic reticulum membrane. The enzyme catalyses an alpha-D-Man-(1-&gt;3)-[alpha-D-Man-(1-&gt;6)]-beta-D-Man-(1-&gt;4)-beta-D-GlcNAc-(1-&gt;4)-alpha-D-GlcNAc-diphospho-di-trans,poly-cis-dolichol + 2 GDP-alpha-D-mannose = an alpha-D-Man-(1-&gt;2)-alpha-D-Man-(1-&gt;2)-alpha-D-Man-(1-&gt;3)-[alpha-D-Man-(1-&gt;6)]-beta-D-Man-(1-&gt;4)-beta-D-GlcNAc-(1-&gt;4)-alpha-D-GlcNAc-diphospho-di-trans,poly-cis-dolichol + 2 GDP + 2 H(+). It participates in protein modification; protein glycosylation. Its function is as follows. GDP-Man:Man(3)GlcNAc(2)-PP-Dol alpha-1,2-mannosyltransferase that operates in the biosynthetic pathway of dolichol-linked oligosaccharides, the glycan precursors employed in protein asparagine (N)-glycosylation. The assembly of dolichol-linked oligosaccharides begins on the cytosolic side of the endoplasmic reticulum membrane and finishes in its lumen. The sequential addition of sugars to dolichol pyrophosphate produces dolichol-linked oligosaccharides containing fourteen sugars, including two GlcNAcs, nine mannoses and three glucoses. Once assembled, the oligosaccharide is transferred from the lipid to nascent proteins by oligosaccharyltransferases. Catalyzes, on the cytoplasmic face of the endoplasmic reticulum, the addition of the fourth and fifth mannose residues to the dolichol-linked oligosaccharide chain, to produce Man(5)GlcNAc(2)-PP-dolichol core oligosaccharide. Man(5)GlcNAc(2)-PP-dolichol is a substrate for ALG3, the following enzyme in the biosynthetic pathway. The sequence is that of GDP-Man:Man(3)GlcNAc(2)-PP-Dol alpha-1,2-mannosyltransferase from Homo sapiens (Human).